The following is a 265-amino-acid chain: Hydroxyethylthiazole kinase (265 aa).

Methionine 50 contributes to the substrate binding site. Residues arginine 125 and threonine 171 each contribute to the ATP site. Glycine 198 is a binding site for substrate.

The protein belongs to the Thz kinase family. It depends on Mg(2+) as a cofactor.

The catalysed reaction is 5-(2-hydroxyethyl)-4-methylthiazole + ATP = 4-methyl-5-(2-phosphooxyethyl)-thiazole + ADP + H(+). It functions in the pathway cofactor biosynthesis; thiamine diphosphate biosynthesis; 4-methyl-5-(2-phosphoethyl)-thiazole from 5-(2-hydroxyethyl)-4-methylthiazole: step 1/1. In terms of biological role, catalyzes the phosphorylation of the hydroxyl group of 4-methyl-5-beta-hydroxyethylthiazole (THZ). The polypeptide is Hydroxyethylthiazole kinase (Salmonella newport (strain SL254)).